A 166-amino-acid polypeptide reads, in one-letter code: NAD(P)H-quinone oxidoreductase subunit I, chloroplastic (166 aa).

4Fe-4S ferredoxin-type domains are found at residues 55–84 (GRIHFEFDKCIACEVCVRVCPIDLPVVDWK) and 95–124 (LNYSIDFGICIFCGNCVEYCPTNCLSMTEE). Residues Cys64, Cys67, Cys70, Cys74, Cys104, Cys107, Cys110, and Cys114 each coordinate [4Fe-4S] cluster.

It belongs to the complex I 23 kDa subunit family. NDH is composed of at least 16 different subunits, 5 of which are encoded in the nucleus. [4Fe-4S] cluster serves as cofactor.

The protein resides in the plastid. It localises to the chloroplast thylakoid membrane. The enzyme catalyses a plastoquinone + NADH + (n+1) H(+)(in) = a plastoquinol + NAD(+) + n H(+)(out). The catalysed reaction is a plastoquinone + NADPH + (n+1) H(+)(in) = a plastoquinol + NADP(+) + n H(+)(out). Its function is as follows. NDH shuttles electrons from NAD(P)H:plastoquinone, via FMN and iron-sulfur (Fe-S) centers, to quinones in the photosynthetic chain and possibly in a chloroplast respiratory chain. The immediate electron acceptor for the enzyme in this species is believed to be plastoquinone. Couples the redox reaction to proton translocation, and thus conserves the redox energy in a proton gradient. The chain is NAD(P)H-quinone oxidoreductase subunit I, chloroplastic from Rensonia salvadorica.